A 215-amino-acid chain; its full sequence is Riboflavin synthase (215 aa).

2 Lumazine-binding repeats span residues 1–96 and 97–193; these read MFTG…FGGH and FVSG…YRFL. 2,4-dihydroxypteridine contacts are provided by residues 4-6, 47-49, 61-66, 100-102, Lys-135, 144-146, and 158-163; these read GII, CLT, DVMPET, GHV, SLT, and SLIPHT.

In terms of assembly, homotrimer. Can interact with 6,7-dimethyl-8-ribityllumazine synthase, forming a lumazine synthase/riboflavin synthase complex, also designated as 'heavy riboflavin synthase complex', which consists of a trimer of riboflavin synthase enclosed within an icosahedral structure composed of 60 subunits of 6,7-dimethyl-8-ribityllumazine synthase.

The enzyme catalyses 2 6,7-dimethyl-8-(1-D-ribityl)lumazine + H(+) = 5-amino-6-(D-ribitylamino)uracil + riboflavin. It participates in cofactor biosynthesis; riboflavin biosynthesis; riboflavin from 2-hydroxy-3-oxobutyl phosphate and 5-amino-6-(D-ribitylamino)uracil: step 2/2. Its activity is regulated as follows. Is activated by sulfite ions. Its function is as follows. Catalyzes the dismutation of two molecules of 6,7-dimethyl-8-ribityllumazine, resulting in the formation of riboflavin and 5-amino-6-(D-ribitylamino)uracil. This Bacillus subtilis (strain 168) protein is Riboflavin synthase (ribE).